The following is a 574-amino-acid chain: Pyruvate kinase PKLR (574 aa).

Phosphoserine occurs at positions 2, 19, 26, and 43. R116 is a binding site for substrate. N118, S120, D156, and T157 together coordinate K(+). Residue 118–121 (NFSH) participates in ATP binding. 2 residues coordinate ATP: R163 and K250. S292 carries the phosphoserine modification. Residue K313 participates in substrate binding. E315 contributes to the Mn(2+) binding site. Residues G338, D339, and T371 each contribute to the substrate site. D339 lines the Mn(2+) pocket. Residues 475–480 (TTTGRS), W525, R532, and 559–564 (RPGSGY) each bind beta-D-fructose 1,6-bisphosphate.

The protein belongs to the pyruvate kinase family. Homotetramer. The cofactor is Mg(2+). Mn(2+) is required as a cofactor. K(+) serves as cofactor.

The enzyme catalyses pyruvate + ATP = phosphoenolpyruvate + ADP + H(+). The protein operates within carbohydrate degradation; glycolysis; pyruvate from D-glyceraldehyde 3-phosphate: step 5/5. Allosterically activated by fructose 1,6-bisphosphate. Its function is as follows. Pyruvate kinase that catalyzes the conversion of phosphoenolpyruvate to pyruvate with the synthesis of ATP, and which plays a key role in glycolysis. This chain is Pyruvate kinase PKLR (PKLR), found in Homo sapiens (Human).